The following is a 153-amino-acid chain: Superoxide dismutase [Cu-Zn] (153 aa).

3 residues coordinate Cu cation: His-45, His-47, and His-62. An intrachain disulfide couples Cys-56 to Cys-145. 4 residues coordinate Zn(2+): His-62, His-70, His-79, and Asp-82. A Cu cation-binding site is contributed by His-119.

It belongs to the Cu-Zn superoxide dismutase family. Homodimer. Requires Cu cation as cofactor. Zn(2+) serves as cofactor.

It localises to the cytoplasm. It carries out the reaction 2 superoxide + 2 H(+) = H2O2 + O2. Functionally, destroys radicals which are normally produced within the cells and which are toxic to biological systems. This chain is Superoxide dismutase [Cu-Zn], found in Drosophila willistoni (Fruit fly).